The sequence spans 1051 residues: Lateral signaling target protein 2 homolog (1051 aa).

4 disordered regions span residues 305–440 (PLGS…DEDL), 516–552 (GSNAATERQQQQQHMDELQPGDQQQQQQQLQDEPSTS), 566–703 (HLPS…NASS), and 837–968 (IDLA…DGKA). Positions 319–358 (NNTSSSTSNNNNNNNNNSSSSSSSSSGSGSNTAKTSTSST) are enriched in low complexity. Over residues 360–370 (KAVERLVDHRN) the composition is skewed to basic and acidic residues. Residues 371–391 (NNSSTVAGATQPSTARSPSML) show a composition bias toward polar residues. Low complexity-rich tracts occupy residues 392 to 401 (SLSAGSTPTA) and 409 to 428 (PSHSIASTSSAATTSTNPPA). Positions 518–528 (NAATERQQQQQ) are enriched in polar residues. Composition is skewed to low complexity over residues 533-549 (LQPGDQQQQQQQLQDEP) and 568-582 (PSSSSENEQAPSSNQ). 2 positions are modified to phosphoserine: Ser-569 and Ser-570. Residues 583–596 (QTTIKTPNGNQSMP) show a composition bias toward polar residues. A compositionally biased stretch (low complexity) spans 597–606 (NSSSSSSNHN). Basic residues-rich tracts occupy residues 607–637 (NNRHRHSHSHSHSSHHHHHHHRHHHHTHPHH) and 650–672 (HHHHHHHHHQSHPHRINRSARKR). A compositionally biased stretch (polar residues) spans 692–703 (TPGSADTSNASS). The segment covering 840–852 (ASGNNNGNSNAAA) has biased composition (low complexity). A Phosphoserine modification is found at Ser-861. 2 stretches are compositionally biased toward low complexity: residues 879–924 (QQQQ…SPIS) and 937–960 (SSIGTTSTITPSTAAATATTMSPP). The FYVE-type zinc finger occupies 965–1025 (DGKAPRCMSC…VCRECYVREV (61 aa)). Residues Cys-971, Cys-974, Cys-987, Cys-990, Cys-995, Cys-998, Cys-1017, and Cys-1020 each contribute to the Zn(2+) site. The tract at residues 1028 to 1051 (SRQAPAQPSQAHGQASRPQAASAS) is disordered.

Belongs to the lst-2 family.

Negative regulator of epidermal growth factor receptor (EGFR) signaling. The protein is Lateral signaling target protein 2 homolog of Drosophila mojavensis (Fruit fly).